Consider the following 219-residue polypeptide: Response regulator ArlR (219 aa).

Residues 3–116 (NILIVEDEQN…ELLARIRAVL (114 aa)) enclose the Response regulatory domain. The residue at position 52 (Asp52) is a 4-aspartylphosphate. The segment at residues 122 to 219 (KDVLDINGII…TVRGVGYVIR (98 aa)) is a DNA-binding region (ompR/PhoB-type).

Post-translationally, phosphorylated by ArlS.

It localises to the cytoplasm. Its function is as follows. Member of the two-component regulatory system ArlS/ArlR. This is Response regulator ArlR (arlR) from Staphylococcus epidermidis (strain ATCC 35984 / DSM 28319 / BCRC 17069 / CCUG 31568 / BM 3577 / RP62A).